The following is a 519-amino-acid chain: Exodeoxyribonuclease 7 large subunit (519 aa).

The protein belongs to the XseA family. Heterooligomer composed of large and small subunits.

Its subcellular location is the cytoplasm. The catalysed reaction is Exonucleolytic cleavage in either 5'- to 3'- or 3'- to 5'-direction to yield nucleoside 5'-phosphates.. Bidirectionally degrades single-stranded DNA into large acid-insoluble oligonucleotides, which are then degraded further into small acid-soluble oligonucleotides. The polypeptide is Exodeoxyribonuclease 7 large subunit (Cereibacter sphaeroides (strain ATCC 17025 / ATH 2.4.3) (Rhodobacter sphaeroides)).